The primary structure comprises 92 residues: Alpha-elapitoxin-Lh2a (92 aa).

Positions 1–21 (MKTLLLTLVVVTIVCLDLGDS) are cleaved as a signal peptide. Intrachain disulfides connect cysteine 24–cysteine 41, cysteine 34–cysteine 62, cysteine 47–cysteine 51, cysteine 66–cysteine 77, and cysteine 78–cysteine 83.

This sequence belongs to the three-finger toxin family. Long-chain subfamily. Type II alpha-neurotoxin sub-subfamily. In terms of tissue distribution, expressed by the venom gland.

The protein localises to the secreted. Binds with high affinity to muscular (alpha-1/CHRNA1) and neuronal (alpha-7/CHRNA7) nicotinic acetylcholine receptor (nAChR) and inhibits acetylcholine from binding to the receptor, thereby impairing neuromuscular and neuronal transmission. The polypeptide is Alpha-elapitoxin-Lh2a (Hydrophis hardwickii (Hardwick's spine-bellied seasnake)).